A 182-amino-acid polypeptide reads, in one-letter code: Crossover junction endodeoxyribonuclease RuvC (182 aa).

Catalysis depends on residues Asp7, Glu67, and Asp139. Mg(2+)-binding residues include Asp7, Glu67, and Asp139.

The protein belongs to the RuvC family. In terms of assembly, homodimer which binds Holliday junction (HJ) DNA. The HJ becomes 2-fold symmetrical on binding to RuvC with unstacked arms; it has a different conformation from HJ DNA in complex with RuvA. In the full resolvosome a probable DNA-RuvA(4)-RuvB(12)-RuvC(2) complex forms which resolves the HJ. Mg(2+) is required as a cofactor.

The protein localises to the cytoplasm. It catalyses the reaction Endonucleolytic cleavage at a junction such as a reciprocal single-stranded crossover between two homologous DNA duplexes (Holliday junction).. In terms of biological role, the RuvA-RuvB-RuvC complex processes Holliday junction (HJ) DNA during genetic recombination and DNA repair. Endonuclease that resolves HJ intermediates. Cleaves cruciform DNA by making single-stranded nicks across the HJ at symmetrical positions within the homologous arms, yielding a 5'-phosphate and a 3'-hydroxyl group; requires a central core of homology in the junction. The consensus cleavage sequence is 5'-(A/T)TT(C/G)-3'. Cleavage occurs on the 3'-side of the TT dinucleotide at the point of strand exchange. HJ branch migration catalyzed by RuvA-RuvB allows RuvC to scan DNA until it finds its consensus sequence, where it cleaves and resolves the cruciform DNA. The protein is Crossover junction endodeoxyribonuclease RuvC of Bordetella parapertussis (strain 12822 / ATCC BAA-587 / NCTC 13253).